The following is a 252-amino-acid chain: MPNASLVIANWKMNGNRELTKTMSAALREKLNQLQQVKLVICPPFTLIGELANQCYYDDIAIGAQNVSEHTGGAFTGEISTAQLQEFGVSYVLVGHSERRQLFAETDKMVNEKALATVNAGMTAVICVGENKAQRDEGNTWEVVAQQAQAALADLPKEQAGKIVLAYEPVWAIGTGETASPEQAQDVHAKLRALLVEQFGAIGEKMPLLYGGSVKADNAAELFAQKDIDGGLIGGASLKESDFVAICQAAQG.

10-12 (NWK) serves as a coordination point for substrate. His-96 (electrophile) is an active-site residue. Glu-168 serves as the catalytic Proton acceptor. Substrate is bound by residues Gly-174, Ser-213, and 234-235 (GG).

It belongs to the triosephosphate isomerase family. As to quaternary structure, homodimer.

The protein localises to the cytoplasm. It carries out the reaction D-glyceraldehyde 3-phosphate = dihydroxyacetone phosphate. It functions in the pathway carbohydrate biosynthesis; gluconeogenesis. Its pathway is carbohydrate degradation; glycolysis; D-glyceraldehyde 3-phosphate from glycerone phosphate: step 1/1. Involved in the gluconeogenesis. Catalyzes stereospecifically the conversion of dihydroxyacetone phosphate (DHAP) to D-glyceraldehyde-3-phosphate (G3P). The chain is Triosephosphate isomerase from Idiomarina loihiensis (strain ATCC BAA-735 / DSM 15497 / L2-TR).